Consider the following 1040-residue polypeptide: DNA mismatch repair protein MutS (1040 aa).

The span at Met1 to Asn10 shows a compositional bias: polar residues. Disordered regions lie at residues Met1–Val22 and Ala130–Thr157. The span at Ser11–Val22 shows a compositional bias: low complexity. Over residues Ala130–Pro143 the composition is skewed to polar residues. Gly759–Ser766 lines the ATP pocket.

This sequence belongs to the DNA mismatch repair MutS family.

In terms of biological role, this protein is involved in the repair of mismatches in DNA. It is possible that it carries out the mismatch recognition step. This protein has a weak ATPase activity. This is DNA mismatch repair protein MutS from Psychrobacter cryohalolentis (strain ATCC BAA-1226 / DSM 17306 / VKM B-2378 / K5).